The chain runs to 434 residues: Trigger factor (434 aa).

Positions 160-245 (GDKVKMNFVG…LTEVLAANLP (86 aa)) constitute a PPIase FKBP-type domain.

The protein belongs to the FKBP-type PPIase family. Tig subfamily.

The protein resides in the cytoplasm. The enzyme catalyses [protein]-peptidylproline (omega=180) = [protein]-peptidylproline (omega=0). In terms of biological role, involved in protein export. Acts as a chaperone by maintaining the newly synthesized protein in an open conformation. Functions as a peptidyl-prolyl cis-trans isomerase. The protein is Trigger factor of Shewanella sp. (strain ANA-3).